The primary structure comprises 319 residues: Ribosomal RNA small subunit methyltransferase H (319 aa).

S-adenosyl-L-methionine contacts are provided by residues 34 to 36 (GGH), D54, F83, D104, and Q111.

This sequence belongs to the methyltransferase superfamily. RsmH family.

The protein resides in the cytoplasm. The catalysed reaction is cytidine(1402) in 16S rRNA + S-adenosyl-L-methionine = N(4)-methylcytidine(1402) in 16S rRNA + S-adenosyl-L-homocysteine + H(+). Specifically methylates the N4 position of cytidine in position 1402 (C1402) of 16S rRNA. The protein is Ribosomal RNA small subunit methyltransferase H of Lactiplantibacillus plantarum (strain ATCC BAA-793 / NCIMB 8826 / WCFS1) (Lactobacillus plantarum).